We begin with the raw amino-acid sequence, 445 residues long: Tubulin beta-4B chain (445 aa).

The short motif at 1-4 (MREI) is the MREI motif element. Gln11 is a GTP binding site. Thr55 carries the phosphothreonine modification. Lys58 is subject to N6-acetyllysine. The GTP site is built by Glu69, Ser138, Gly142, Thr143, and Gly144. Glu69 is a Mg(2+) binding site. At Ser172 the chain carries Phosphoserine; by CDK1. Positions 204 and 226 each coordinate GTP. The tract at residues 426–445 (QDATAEEEGEFEEEAEEEVA) is disordered. Acidic residues predominate over residues 429–445 (TAEEEGEFEEEAEEEVA). 5-glutamyl polyglutamate is present on Glu438.

The protein belongs to the tubulin family. Dimer of alpha and beta chains. A typical microtubule is a hollow water-filled tube with an outer diameter of 25 nm and an inner diameter of 15 nM. Alpha-beta heterodimers associate head-to-tail to form protofilaments running lengthwise along the microtubule wall with the beta-tubulin subunit facing the microtubule plus end conferring a structural polarity. Microtubules usually have 13 protofilaments but different protofilament numbers can be found in some organisms and specialized cells. Component of sperm flagellar doublet microtubules. Mg(2+) serves as cofactor. Post-translationally, some glutamate residues at the C-terminus are polyglycylated, resulting in polyglycine chains on the gamma-carboxyl group. Glycylation is mainly limited to tubulin incorporated into axonemes (cilia and flagella) whereas glutamylation is prevalent in neuronal cells, centrioles, axonemes, and the mitotic spindle. Both modifications can coexist on the same protein on adjacent residues, and lowering polyglycylation levels increases polyglutamylation, and reciprocally. Cilia and flagella glycylation is required for their stability and maintenance. Flagella glycylation controls sperm motility. In terms of processing, some glutamate residues at the C-terminus are polyglutamylated, resulting in polyglutamate chains on the gamma-carboxyl group. Polyglutamylation plays a key role in microtubule severing by spastin (SPAST). SPAST preferentially recognizes and acts on microtubules decorated with short polyglutamate tails: severing activity by SPAST increases as the number of glutamates per tubulin rises from one to eight, but decreases beyond this glutamylation threshold. Glutamylation is also involved in cilia motility. Phosphorylated on Ser-172 by CDK1 during the cell cycle, from metaphase to telophase, but not in interphase. This phosphorylation inhibits tubulin incorporation into microtubules.

It is found in the cytoplasm. Its subcellular location is the cytoskeleton. The protein localises to the flagellum axoneme. Functionally, tubulin is the major constituent of microtubules, a cylinder consisting of laterally associated linear protofilaments composed of alpha- and beta-tubulin heterodimers. Microtubules grow by the addition of GTP-tubulin dimers to the microtubule end, where a stabilizing cap forms. Below the cap, tubulin dimers are in GDP-bound state, owing to GTPase activity of alpha-tubulin. The polypeptide is Tubulin beta-4B chain (TUBB4B) (Bos taurus (Bovine)).